We begin with the raw amino-acid sequence, 68 residues long: UPF0435 protein Sca_1453 (68 aa).

Belongs to the UPF0435 family.

The chain is UPF0435 protein Sca_1453 from Staphylococcus carnosus (strain TM300).